The following is a 58-amino-acid chain: Microcin J25 (58 aa).

The propeptide occupies 1–37 (MIKHFHFNKLSSGKKNNVPSPAKGVIQIKKSASQLTK). A cross-link (isoglutamyl glycine isopeptide (Gly-Glu)) is located at residues 38–45 (GGAGHVPE).

The protein localises to the secreted. Functionally, peptide antibiotic that functions through inhibition of the bacterial DNA-dependent RNA polymerase (RNAP). Inhibits transcription by binding deep within RNAP secondary channel, where it sterically blocks the folding of the trigger loop, which is essential for efficient catalysis. In addition, it also seems to restrict access of nucleotide substrates to the catalytic center, and shows a partially competitive mode of inhibition with them. Exhibits potent bacteriocidal activity against a range of Enterobacteriaceae, including several pathogenic E.coli, Salmonella and Shigella strains. Also acts on the cytoplasmic membrane of Salmonella newport, producing alteration of membrane permeability and disruption of the subsequent gradient dissipation, which inhibits several processes essential for cell viability, such as oxygen consumption. Induces bacterial filamentation in susceptible cells in a non-SOS-dependent way, but this phenotype may result from impaired transcription of genes coding for cell division proteins. In Escherichia coli, this protein is Microcin J25 (mcjA).